A 354-amino-acid polypeptide reads, in one-letter code: uncharacterized protein (354 aa).

2 disordered regions span residues 1 to 74 (MGTK…ENCR) and 87 to 115 (SESGVCTEPEERGQGGKKSQFLPINQRAS). An N6-acetyllysine modification is found at Lys19. The span at 32–41 (EGPSSNSSFH) shows a compositional bias: low complexity. The span at 45 to 54 (EEGTDLEGDM) shows a compositional bias: acidic residues. Ser115 and Ser174 each carry phosphoserine. Residues 182 to 199 (QGSSQDLPMQANLSQSNE) show a composition bias toward polar residues. 2 disordered regions span residues 182-208 (QGSSQDLPMQANLSQSNEGPLLAGRDR) and 235-298 (QVAD…DELS). Phosphotyrosine is present on Tyr291. Ser292 is modified (phosphoserine).

This is an uncharacterized protein from Mus musculus (Mouse).